The primary structure comprises 191 residues: Fe/S biogenesis protein NfuA (191 aa).

Residues Cys149 and Cys152 each coordinate [4Fe-4S] cluster.

This sequence belongs to the NfuA family. Homodimer. [4Fe-4S] cluster serves as cofactor.

Its function is as follows. Involved in iron-sulfur cluster biogenesis. Binds a 4Fe-4S cluster, can transfer this cluster to apoproteins, and thereby intervenes in the maturation of Fe/S proteins. Could also act as a scaffold/chaperone for damaged Fe/S proteins. This chain is Fe/S biogenesis protein NfuA, found in Sodalis glossinidius (strain morsitans).